Reading from the N-terminus, the 123-residue chain is Homeobox protein CDX-1 (123 aa).

The homeobox DNA-binding region spans 5 to 64 (KDKYRVVYTDHQRLELEKEFHYSRYITIRRKSELAANLGLTERQVKIWFQNRRAKERKVN). Positions 8 to 29 (YRVVYTDHQRLELEKEFHYSRY) are interaction with DNA. The segment at 47-58 (RQVKIWFQNRRA) is interaction with 5-mCpG DNA. The segment covering 57-68 (RAKERKVNKKKQ) has biased composition (basic residues). The segment at 57 to 123 (RAKERKVNKK…PVPVKEEFLP (67 aa)) is disordered.

This sequence belongs to the Caudal homeobox family. Intestinal epithelium.

The protein resides in the nucleus. In terms of biological role, plays a role in transcriptional regulation. Involved in activated KRAS-mediated transcriptional activation of PRKD1 in colorectal cancer (CRC) cells. Binds to the PRKD1 promoter in colorectal cancer (CRC) cells. Could play a role in the terminal differentiation of the intestine. Binds preferentially to methylated DNA. The sequence is that of Homeobox protein CDX-1 (Cdx1) from Rattus norvegicus (Rat).